Reading from the N-terminus, the 81-residue chain is Photosystem I iron-sulfur center (81 aa).

2 consecutive 4Fe-4S ferredoxin-type domains span residues 2–31 and 39–68; these read SHSVKIYDTCIGCTQCVRACPTDVLEMVPW and IASAPRTEDCVGCKRCESACPTDFLSVRVY. [4Fe-4S] cluster-binding residues include Cys-11, Cys-14, Cys-17, Cys-21, Cys-48, Cys-51, Cys-54, and Cys-58.

The eukaryotic PSI reaction center is composed of at least 11 subunits. The cofactor is [4Fe-4S] cluster.

It localises to the plastid. The protein localises to the chloroplast thylakoid membrane. The enzyme catalyses reduced [plastocyanin] + hnu + oxidized [2Fe-2S]-[ferredoxin] = oxidized [plastocyanin] + reduced [2Fe-2S]-[ferredoxin]. Apoprotein for the two 4Fe-4S centers FA and FB of photosystem I (PSI); essential for photochemical activity. FB is the terminal electron acceptor of PSI, donating electrons to ferredoxin. The C-terminus interacts with PsaA/B/D and helps assemble the protein into the PSI complex. Required for binding of PsaD and PsaE to PSI. PSI is a plastocyanin/cytochrome c6-ferredoxin oxidoreductase, converting photonic excitation into a charge separation, which transfers an electron from the donor P700 chlorophyll pair to the spectroscopically characterized acceptors A0, A1, FX, FA and FB in turn. In Nephroselmis olivacea (Green alga), this protein is Photosystem I iron-sulfur center.